Reading from the N-terminus, the 128-residue chain is uncharacterized protein (128 aa).

This is an uncharacterized protein from Saccharomyces cerevisiae (strain ATCC 204508 / S288c) (Baker's yeast).